A 257-amino-acid polypeptide reads, in one-letter code: 3-deoxy-manno-octulosonate cytidylyltransferase (257 aa).

Belongs to the KdsB family.

Its subcellular location is the cytoplasm. The catalysed reaction is 3-deoxy-alpha-D-manno-oct-2-ulosonate + CTP = CMP-3-deoxy-beta-D-manno-octulosonate + diphosphate. It participates in nucleotide-sugar biosynthesis; CMP-3-deoxy-D-manno-octulosonate biosynthesis; CMP-3-deoxy-D-manno-octulosonate from 3-deoxy-D-manno-octulosonate and CTP: step 1/1. It functions in the pathway bacterial outer membrane biogenesis; lipopolysaccharide biosynthesis. Functionally, activates KDO (a required 8-carbon sugar) for incorporation into bacterial lipopolysaccharide in Gram-negative bacteria. This Methylobacillus flagellatus (strain ATCC 51484 / DSM 6875 / VKM B-1610 / KT) protein is 3-deoxy-manno-octulosonate cytidylyltransferase.